We begin with the raw amino-acid sequence, 230 residues long: Phosducin-like protein 1 (230 aa).

M1 bears the N-acetylmethionine mark. Residues 16-166 enclose the Phosducin domain; sequence AEKDKHTTVD…VVGYKNGLEK (151 aa). The stretch at 25–79 forms a coiled coil; sequence DSDDKSSGEENLDELLNELDRELDEDHEFLSAYRSERLQQISDHLKQVKKNVEDD. The segment at 81-230 is thioredoxin fold; that stretch reads YGRLQCIDNE…RSESDSDLDI (150 aa).

This sequence belongs to the phosducin family. Interacts with the G protein beta-gamma subunit complex (STE4-STE18 complex).

The protein localises to the cytoplasm. Not essential for growth. Inhibits early G-protein signaling events following pheromone stimulation. May help create heterodimerizable beta-tubulin by facilitating the efficient transfer of nascent beta-tubulin polypeptides to the folding apparatus. The sequence is that of Phosducin-like protein 1 (PLP1) from Saccharomyces cerevisiae (strain ATCC 204508 / S288c) (Baker's yeast).